We begin with the raw amino-acid sequence, 472 residues long: 7-dimethylallyltryptophan synthase hasE (472 aa).

Glutamate 138 is a binding site for L-tryptophan. Dimethylallyl diphosphate contacts are provided by arginine 154, lysine 239, tyrosine 241, lysine 313, tyrosine 315, tyrosine 393, tyrosine 460, and tyrosine 464.

Belongs to the tryptophan dimethylallyltransferase family. Homodimer.

It carries out the reaction L-tryptophan + dimethylallyl diphosphate = 7-(3-methylbut-2-enyl)-L-tryptophan + diphosphate. The catalysed reaction is an N-terminal L-tryptophanyl-L-alpha-aminoacyl-[peptide] + H2O = an N-terminal L-alpha-aminoacyl-[peptide] + L-tryptophan. The protein operates within secondary metabolite biosynthesis. Its function is as follows. 7-dimethylallyltryptophan synthase; part of the gene cluster that mediates the biosynthesis of hexadehydro-astechrome (HAS), a tryptophan-derived iron(III)-complex that acts as a virulence factor in infected mice. Catalyzes the prenylation of L-tryptophan at the C-7 position of the indole moiety. The enzyme is specific for dimethylallyl diphosphate (DMAPP) as prenyl donor. Also accepts D-tryptophan, typtophan-derivatives with modifications at the side chain or the indole ring, and linear and cyclic dipeptides such as H-L-Trp-L-Gly-OH or cyclo-L-Trp-L-Gly as substrates, however with lower efficiency. Also has tryptophan aminopeptidase activity towards linear peptides with a tryptophanyl moiety at the N-terminus. Dipeptides are better substrates than peptides with 3 or more amino acids. Enzymatic rate constants however are much higher for the prenyltransferase activity than for the aminopeptidase activity. Within the hexadehydro-astechrome biosyntetic pathway, hasE catalyzes the prenylation of the hasD-tethered tryptophan or the resulting tethered Trp-Ala dipeptid. The HAS biosynthesis begins with the synthesis of a tethered Trp-Ala dipeptide by the NRPS hasD. The 7-dimethylallyltryptophan synthase hasE then catalyzes the prenylation of the hasD-tethered tryptophan or the resulting tethered Trp-Ala dipeptide at the C-7 position of the indole moiety. HAS biosynthesis continues via tethered intermediates with the succesive actions of the cytochrome P450 monooxygenase hasH, the O-methyltransferase hasC, and the FAD-linked oxidoreductase hasG. The resulting O-methylated diketopiperazine is then released from hasD. Finally, three O-methylated diketopiperazine molecules assemble in a trimeric complex with Fe(III) to produce hexadehydro-astechrome. The protein is 7-dimethylallyltryptophan synthase hasE of Aspergillus fumigatus (strain CBS 144.89 / FGSC A1163 / CEA10) (Neosartorya fumigata).